The chain runs to 1010 residues: Contactin-1 (1010 aa).

A signal peptide spans 1–19 (MRFFISHLVTLCFIFCVAD). 6 consecutive Ig-like C2-type domains span residues 33-123 (PVFE…ATLS), 132-215 (PEEH…KSVF), 232-317 (PADI…ARVY), 322-398 (PEWV…AELK), 404-491 (PTFE…GVLE), and 496-592 (TRIT…LVVR). 2 disulfide bridges follow: Cys57/Cys106 and Cys150/Cys203. 2 N-linked (GlcNAc...) asparagine glycosylation sites follow: Asn200 and Asn249. Cys254 and Cys301 form a disulfide bridge. Residue Asn329 is glycosylated (N-linked (GlcNAc...) asparagine). Intrachain disulfides connect Cys343–Cys382 and Cys427–Cys475. Residues Asn448, Asn464, Asn485, and Asn512 are each glycosylated (N-linked (GlcNAc...) asparagine). Cys517 and Cys574 are joined by a disulfide. The N-linked (GlcNAc...) asparagine glycan is linked to Asn582. Fibronectin type-III domains lie at 597-695 (PPGG…TEGA), 700-797 (APSD…SAQD), 802-897 (VPTD…APPS), and 899-990 (RPRI…TAGV). Over residues 679-689 (GTGEPSMPSQR) the composition is skewed to polar residues. Residues 679-708 (GTGEPSMPSQRIRTEGAPPNVAPSDVGGGG) are disordered. A glycan (N-linked (GlcNAc...) asparagine) is linked at Asn924. Ser984 carries the GPI-anchor amidated serine lipid modification. The propeptide at 985 to 1010 (GATAGVPTLLLGLVLPALGVLAYSGF) is removed in mature form.

It belongs to the immunoglobulin superfamily. Contactin family. In terms of assembly, interacts with TNR.

Its subcellular location is the cell membrane. In terms of biological role, mediates cell surface interactions during nervous system development. Interaction with TNR enhances the neurite outgrowth. This chain is Contactin-1 (CNTN1), found in Gallus gallus (Chicken).